Here is a 376-residue protein sequence, read N- to C-terminus: 2-aminoethylphosphonate--pyruvate transaminase 2 (376 aa).

Lys194 carries the N6-(pyridoxal phosphate)lysine modification.

The protein belongs to the class-V pyridoxal-phosphate-dependent aminotransferase family. PhnW subfamily. As to quaternary structure, homodimer. It depends on pyridoxal 5'-phosphate as a cofactor.

It carries out the reaction (2-aminoethyl)phosphonate + pyruvate = phosphonoacetaldehyde + L-alanine. Involved in phosphonate degradation. This chain is 2-aminoethylphosphonate--pyruvate transaminase 2, found in Burkholderia lata (strain ATCC 17760 / DSM 23089 / LMG 22485 / NCIMB 9086 / R18194 / 383).